The chain runs to 240 residues: Chloroplastic group IIB intron splicing facilitator CRS2-B, chloroplastic (240 aa).

This sequence belongs to the PTH family. CRS2 subfamily. In terms of assembly, part of large ribonucleo-protein complexes that include group IIB introns and either CAF1 or CAF2.

It localises to the plastid. The protein localises to the chloroplast stroma. Required for the splicing of group IIB introns in chloroplasts. The polypeptide is Chloroplastic group IIB intron splicing facilitator CRS2-B, chloroplastic (CRS2B) (Arabidopsis thaliana (Mouse-ear cress)).